Reading from the N-terminus, the 147-residue chain is Small ribosomal subunit protein uS12 (147 aa).

Belongs to the universal ribosomal protein uS12 family. Part of the 30S ribosomal subunit.

With S4 and S5 plays an important role in translational accuracy. Located at the interface of the 30S and 50S subunits. This Methanococcus maripaludis (strain DSM 14266 / JCM 13030 / NBRC 101832 / S2 / LL) protein is Small ribosomal subunit protein uS12.